A 406-amino-acid polypeptide reads, in one-letter code: Membrane protein UL43 homolog (406 aa).

Helical transmembrane passes span 48-68, 71-91, 103-123, 126-146, 162-182, 188-208, 266-286, 299-319, 339-359, and 386-406; these read LFLVGLQASVITSGLILQYHV, AAVNATIMGLIVVSGLWPTSV, CLQTVVVLGFAVLWAVGCPIS, LPFVELLGISISAITGTVAAV, IYFYVMMLGTGLGGLLTVILY, YEVLIGLCISIVTLVSIVDAA, SVIPPVLYIVTPLMWAISHII, LAVSIGGHIIAFGLQGFAVLY, IAVTFAGISWGAIIILTSTVA, and VYHVCVYIIINLCYLCGTYVS.

It belongs to the alphaherpesvirinae HHV-1 UL43 family.

The protein resides in the membrane. In Varicella-zoster virus (strain Dumas) (HHV-3), this protein is Membrane protein UL43 homolog.